We begin with the raw amino-acid sequence, 35 residues long: Trypsin inhibitor 1 (35 aa).

3 cysteine pairs are disulfide-bonded: C2-C19, C9-C23, and C18-C34.

Trypsin inhibitor. This chain is Trypsin inhibitor 1, found in Spinacia oleracea (Spinach).